Consider the following 685-residue polypeptide: Bifunctional diguanylate cyclase/cyclic di-GMP phosphodiesterase MucR (685 aa).

One can recognise an MHYT domain in the interval Tyr6–Pro199. Transmembrane regions (helical) follow at residues Val9–Ala29, Leu44–Leu64, Gly77–Val97, Gly117–Tyr137, Trp141–Phe161, Ala175–Ala195, and Gly214–Val234. The Cytoplasmic segment spans residues Ser235–Ala685. In terms of domain architecture, GGDEF spans Arg293–Ser425. An EAL domain is found at Gln434–Ala685. 3',3'-c-di-GMP contacts are provided by Gln455, Glu469, Leu472, Arg473, Asn528, and Gln533. Glu469 contributes to the Mg(2+) binding site. Asn528 serves as a coordination point for Mg(2+). The Mg(2+) site is built by Glu560, Asp590, and Asp591. Residue Asp590 participates in 3',3'-c-di-GMP binding. Position 614 (Arg614) interacts with 3',3'-c-di-GMP. Glu647 is a Mg(2+) binding site. 2 residues coordinate 3',3'-c-di-GMP: Glu650 and Phe669.

In terms of assembly, homodimer. It depends on Mg(2+) as a cofactor.

It localises to the cell inner membrane. The catalysed reaction is 2 GTP = 3',3'-c-di-GMP + 2 diphosphate. It carries out the reaction 3',3'-c-di-GMP + H2O = 5'-phosphoguanylyl(3'-&gt;5')guanosine + H(+). In terms of biological role, displays both diguanylate cyclase (DGC) and c-di-GMP-specific phosphodiesterase (PDE) activity. Probably modulates DGC and PDE activities, and thus c-di-GMP levels, in a growth mode-dependent manner. May act as a PDE under planktonic growth conditions and as a DGC in biofilms. During biofilm formation, it specifically activates alginate biosynthesis via generation of a localized c-di-GMP pool in the vicinity of the alginate biosynthesis protein Alg44. The polypeptide is Bifunctional diguanylate cyclase/cyclic di-GMP phosphodiesterase MucR (Pseudomonas aeruginosa (strain ATCC 15692 / DSM 22644 / CIP 104116 / JCM 14847 / LMG 12228 / 1C / PRS 101 / PAO1)).